Here is a 299-residue protein sequence, read N- to C-terminus: Plant-type L-asparaginase (299 aa).

The Nucleophile role is filled by Thr-169. Residues Arg-197–Asp-200 and Thr-220–Gly-223 contribute to the substrate site.

The protein belongs to the Ntn-hydrolase family. In terms of assembly, heterotetramer of two alpha and two beta chains arranged as a dimer of alpha/beta heterodimers. The uncleaved protein forms homodimers. Post-translationally, autocleaved. Generates the alpha and beta subunits. The N-terminal residue of the beta subunit is thought to be responsible for the nucleophile hydrolase activity.

It carries out the reaction L-asparagine + H2O = L-aspartate + NH4(+). Divalent metal ions and EDTA do not have significant effect on enzyme activity, indicating that activity is metal-independent. Catalyzes the hydrolysis of L-asparagine into L-aspartate and ammonia. Also displays D-asparaginase activity, which is about 20% of the L-asparaginase activity. Does not exhibit glutaminase activity. In Pyrobaculum calidifontis (strain DSM 21063 / JCM 11548 / VA1), this protein is Plant-type L-asparaginase.